A 143-amino-acid polypeptide reads, in one-letter code: Sporulation-specific cell division protein SsgB (143 aa).

Belongs to the SsgA family. In terms of assembly, interacts with SsgA. Interacts with FtsZ (via N-terminus).

Its subcellular location is the cell septum. Involved in sporulation-specific cell division. Required for early stages of sporulation. Important in the process of growth cessation prior to sporulation-specific cell division. Recruits cell division protein FtsZ to the future septum sites and tethers the contractile ring structure (Z ring) to the cytoplasmic membrane during sporulation. Stimulates polymerization and filament length of FtsZ in vitro. The chain is Sporulation-specific cell division protein SsgB from Frankia casuarinae (strain DSM 45818 / CECT 9043 / HFP020203 / CcI3).